A 324-amino-acid polypeptide reads, in one-letter code: Glutathione synthetase (324 aa).

One can recognise an ATP-grasp domain in the interval 124–309 (KLAIAQFREF…VAGMFIDALE (186 aa)). 150–206 (HAEQGDVIFKPLDGMGGAGIFRVGADGMNLGSVIETLTHNGTRTVMAQQYIPAIRDG) lines the ATP pocket. Glutamate 280 and asparagine 282 together coordinate Mg(2+).

This sequence belongs to the prokaryotic GSH synthase family. Requires Mg(2+) as cofactor. Mn(2+) serves as cofactor.

The enzyme catalyses gamma-L-glutamyl-L-cysteine + glycine + ATP = glutathione + ADP + phosphate + H(+). Its pathway is sulfur metabolism; glutathione biosynthesis; glutathione from L-cysteine and L-glutamate: step 2/2. The chain is Glutathione synthetase from Ralstonia nicotianae (strain ATCC BAA-1114 / GMI1000) (Ralstonia solanacearum).